The chain runs to 226 residues: NADH-quinone oxidoreductase subunit B 2 (226 aa).

[4Fe-4S] cluster-binding residues include Cys-37, Cys-38, Cys-103, and Cys-132.

The protein belongs to the complex I 20 kDa subunit family. In terms of assembly, NDH-1 is composed of 14 different subunits. Subunits NuoB, C, D, E, F, and G constitute the peripheral sector of the complex. [4Fe-4S] cluster serves as cofactor.

It localises to the cell membrane. It carries out the reaction a quinone + NADH + 5 H(+)(in) = a quinol + NAD(+) + 4 H(+)(out). NDH-1 shuttles electrons from NADH, via FMN and iron-sulfur (Fe-S) centers, to quinones in the respiratory chain. The immediate electron acceptor for the enzyme in this species is believed to be a menaquinone. Couples the redox reaction to proton translocation (for every two electrons transferred, four hydrogen ions are translocated across the cytoplasmic membrane), and thus conserves the redox energy in a proton gradient. The chain is NADH-quinone oxidoreductase subunit B 2 from Salinispora arenicola (strain CNS-205).